The chain runs to 95 residues: Alpha-conotoxin-like Ms20.4 (95 aa).

A signal peptide spans 1–24 (MPKLAVVLLVLLILPLSYFDVAGG). A propeptide spanning residues 25–45 (QAAEGDRRGNGLARYPQRGGR) is cleaved from the precursor. 4-carboxyglutamate is present on Glu50. Pro56 bears the 4-hydroxyproline mark. 4 disulfide bridges follow: Cys64-Cys73, Cys69-Cys81, Cys74-Cys91, and Cys79-Cys93.

This sequence belongs to the conotoxin D superfamily. In terms of assembly, hetero-, homo- or pseudo-homodimer (identical sequence, different post-translational modifications). Heterodimer of [carboxy'Glu-48', hydroxy'Pro-54']Ms20.1 and [carboxyGlu-50, hydroxyPro-56]Ms20.4 may exist. As to expression, expressed by the venom duct.

It localises to the secreted. In terms of biological role, alpha-conotoxins act on postsynaptic membranes, they bind to the nicotinic acetylcholine receptors (nAChR) and thus inhibit them. Through its two C-terminal domains, this homodimeric protein would bind to two nAChR allosteric sites, located outside the nAChR C-loop of the principal binding face and at the adjacent binding interface in a clockwise direction. This toxin specifically blocks mammalian neuronal nAChR of the alpha-7/CHRNA7, alpha-3-beta-2/CHRNA3-CHRNB2 and alpha-4-beta-2/CHRNA4-CHRNB2 subtypes. In Conus mustelinus (Weasel cone), this protein is Alpha-conotoxin-like Ms20.4.